We begin with the raw amino-acid sequence, 34 residues long: Photosystem I reaction center subunit XII (34 aa).

A helical transmembrane segment spans residues 10–32 (IFIALVVAAHAGVLAVRLCVSLY).

This sequence belongs to the PsaM family.

The protein resides in the cellular thylakoid membrane. The protein is Photosystem I reaction center subunit XII of Synechococcus sp. (strain WH7803).